The sequence spans 378 residues: Ubiquitin-conjugating enzyme E2 Q2 (378 aa).

Positions Asp126 to Glu152 are disordered. A compositionally biased stretch (acidic residues) spans Val140–Glu152. The UBC core domain maps to Gln207–Tyr371. Catalysis depends on Cys307, which acts as the Glycyl thioester intermediate.

This sequence belongs to the ubiquitin-conjugating enzyme family. Post-translationally, auto-ubiquitinated in vitro.

It localises to the cytoplasm. It carries out the reaction S-ubiquitinyl-[E1 ubiquitin-activating enzyme]-L-cysteine + [E2 ubiquitin-conjugating enzyme]-L-cysteine = [E1 ubiquitin-activating enzyme]-L-cysteine + S-ubiquitinyl-[E2 ubiquitin-conjugating enzyme]-L-cysteine.. It participates in protein modification; protein ubiquitination. Functionally, accepts ubiquitin from the E1 complex and catalyzes its covalent attachment to other proteins. In vitro catalyzes 'Lys-48'-linked polyubiquitination. The polypeptide is Ubiquitin-conjugating enzyme E2 Q2 (Ube2q2) (Mus musculus (Mouse)).